The following is a 354-amino-acid chain: Inactive ADP-ribosyltransferase arh2 (354 aa).

It belongs to the ADP-ribosylglycohydrolase family. In terms of tissue distribution, expressed in heart (at protein level). A short form is detected in both heart and tadpole tail (at protein level).

The protein localises to the cytoplasm. Its subcellular location is the myofibril. It is found in the sarcomere. Functionally, required for myofibril assembly and outgrowth of the cardiac chambers in the developing heart. Appears to be catalytically inactive, showing no activity against O-acetyl-ADP-ribose. This chain is Inactive ADP-ribosyltransferase arh2 (adprhl1), found in Xenopus laevis (African clawed frog).